We begin with the raw amino-acid sequence, 1418 residues long: Chromatin remodeling factor mit1 (1418 aa).

The span at 135–148 shows a compositional bias: low complexity; it reads DETASDSATSSSSD. Residues 135–156 form a disordered region; sequence DETASDSATSSSSDTNKKVNRK. Residues 212-271 form a PHD-type zinc finger; sequence VCVCVKCHGREHRSSGKNFVYCDHCSNVYHYDCSPLPSLNKETRNYSQQNGFICPLCSKN. An RING-type; atypical zinc finger spans residues 215 to 269; sequence CVKCHGREHRSSGKNFVYCDHCSNVYHYDCSPLPSLNKETRNYSQQNGFICPLCS. One can recognise a Helicase ATP-binding domain in the interval 568–738; that stretch reads YLRWYTHHPC…FNLLQFLNPM (171 aa). ATP is bound at residue 581–588; sequence DEMGLGKT. The 160-residue stretch at 875–1034 folds into the Helicase C-terminal domain; it reads ILRLLVPKLI…QNHNSEKDLE (160 aa).

The protein belongs to the SNF2/RAD54 helicase family. As to quaternary structure, interacts with clr3.

Its subcellular location is the nucleus. The protein resides in the chromosome. It localises to the centromere. The protein localises to the telomere. Its function is as follows. Required for proper positioning of nucleosomes at heterochromatic loci and for transcriptional gene silencing (TGS) function of the Snf2/Hdac-containing repressor complex (SHREC). This is Chromatin remodeling factor mit1 (mit1) from Schizosaccharomyces pombe (strain 972 / ATCC 24843) (Fission yeast).